Here is a 480-residue protein sequence, read N- to C-terminus: UDP-N-acetylmuramate--L-alanine ligase (480 aa).

115-121 (GTHGKTT) contributes to the ATP binding site.

This sequence belongs to the MurCDEF family.

It is found in the cytoplasm. It catalyses the reaction UDP-N-acetyl-alpha-D-muramate + L-alanine + ATP = UDP-N-acetyl-alpha-D-muramoyl-L-alanine + ADP + phosphate + H(+). The protein operates within cell wall biogenesis; peptidoglycan biosynthesis. In terms of biological role, cell wall formation. The polypeptide is UDP-N-acetylmuramate--L-alanine ligase (Gluconacetobacter diazotrophicus (strain ATCC 49037 / DSM 5601 / CCUG 37298 / CIP 103539 / LMG 7603 / PAl5)).